The following is a 150-amino-acid chain: Ribosome maturation factor RimP (150 aa).

This sequence belongs to the RimP family.

It is found in the cytoplasm. Functionally, required for maturation of 30S ribosomal subunits. The polypeptide is Ribosome maturation factor RimP (Thermotoga sp. (strain RQ2)).